Reading from the N-terminus, the 70-residue chain is U2-agatoxin-Ao1r (70 aa).

The N-terminal stretch at 1-20 (MRSIISLILISAMVFSMIAP) is a signal peptide. Positions 21–34 (VPEEERLQLSEDER) are excised as a propeptide. Disulfide bonds link C37/C53, C44/C58, and C52/C68. L69 is modified (leucine amide).

It belongs to the neurotoxin 01 (U2-agtx) family. In terms of tissue distribution, expressed by the venom gland.

Its subcellular location is the secreted. In terms of biological role, insect active toxin causing rapid but reversible paralysis in crickets. No activity shown in mammals. Does not show effect on mammalian voltage-gated calcium channels. This Agelena orientalis (Funnel-web spider) protein is U2-agatoxin-Ao1r.